An 858-amino-acid polypeptide reads, in one-letter code: Polyhomeotic-like protein 2 (858 aa).

Disordered regions lie at residues 1 to 76 (MENE…QYLQ), 230 to 307 (QQTP…MEGR), 337 to 388 (PQPS…VALQ), 407 to 444 (LQCP…PHTP), 473 to 493 (KEVA…SPHQ), and 529 to 561 (TDLS…KPPQ). 2 stretches are compositionally biased toward low complexity: residues 10 to 34 (TSSS…NSSS) and 230 to 241 (QQTPAAAASGPT). The tract at residues 33–53 (SSGGSGRPTGPQISVYSGIPD) is interaction with BMI1. The segment covering 265-274 (PAQSRNTAQA) has biased composition (polar residues). Low complexity predominate over residues 337–358 (PQPSSKHLQPQFVIQQQPQPQQ). The span at 379–388 (ASVSPSVALQ) shows a compositional bias: polar residues. The segment covering 473–483 (KEVAPGEKSVP) has biased composition (basic and acidic residues). Residues 537–551 (TSGNGNSASSIAGTA) are compositionally biased toward low complexity. Residues 558 to 587 (KPPQAIVKPQILTHVIEGFVIQEGAEPFPV) carry the HD1 motif. Glycyl lysine isopeptide (Lys-Gly) (interchain with G-Cter in SUMO2) cross-links involve residues Lys598 and Lys600. Thr619 is modified (phosphothreonine). Residue Ser621 is modified to Phosphoserine. Lys632 participates in a covalent cross-link: Glycyl lysine isopeptide (Lys-Gly) (interchain with G-Cter in SUMO2). An FCS-type zinc finger spans residues 633-667 (EEGAPLKLKCELCGRVDFAYKFKRSKRFCSMACAK). Cys642, Cys645, Cys661, and Cys665 together coordinate Zn(2+). Disordered stretches follow at residues 688 to 720 (QKAG…TGTV) and 732 to 768 (HSQE…GQRD). Lys702 is covalently cross-linked (Glycyl lysine isopeptide (Lys-Gly) (interchain with G-Cter in SUMO2)). A Phosphoserine modification is found at Ser751. One can recognise an SAM domain in the interval 794 to 858 (WNVEDVYEFI…YARISMLKDS (65 aa)). Residue Lys847 forms a Glycyl lysine isopeptide (Lys-Gly) (interchain with G-Cter in SUMO2) linkage.

Component of a PRC1-like complex. Interacts with CBX4. Interacts with BMI1, PCGF2, PHC1 and RNF2. Interacts with CHTOP. Interacts with the N-terminal region of the SP1 transcription factor and with MAPKAPK2. Interacts with SAMD7 and SAMD11.

It is found in the nucleus. Its function is as follows. Component of a Polycomb group (PcG) multiprotein PRC1-like complex, a complex class required to maintain the transcriptionally repressive state of many genes, including Hox genes, throughout development. PcG PRC1 complex acts via chromatin remodeling and modification of histones; it mediates monoubiquitination of histone H2A 'Lys-119', rendering chromatin heritably changed in its expressibility. In Homo sapiens (Human), this protein is Polyhomeotic-like protein 2 (PHC2).